Reading from the N-terminus, the 213-residue chain is Vacuolar ATPase assembly integral membrane protein vph2 (213 aa).

Transmembrane regions (helical) follow at residues 113-133 (ISAIINILFTVVGTVTAVWYC) and 142-162 (KIALCAFSAILVLVADTFLYV).

It is found in the endoplasmic reticulum membrane. Required for vacuolar ATPase assembly. The polypeptide is Vacuolar ATPase assembly integral membrane protein vph2 (vph2) (Schizosaccharomyces pombe (strain 972 / ATCC 24843) (Fission yeast)).